We begin with the raw amino-acid sequence, 4700 residues long: StAR-related lipid transfer protein 9 (4700 aa).

In terms of domain architecture, Kinesin motor spans 3–384 (NVQVAVRVRP…LRYASSAKNI (382 aa)). 103–110 (GQTGSGKT) lines the ATP pocket. Residues 310–328 (GDSGILSSPSGTSSGGAPS) are compositionally biased toward low complexity. The disordered stretch occupies residues 310-331 (GDSGILSSPSGTSSGGAPSRRQ). In terms of domain architecture, FHA spans 498-569 (LKEGTTKIGR…LTQGAVITLG (72 aa)). Composition is skewed to basic and acidic residues over residues 631–646 (QCDE…ETSH) and 867–877 (TSEKTSSEEHL). Disordered regions lie at residues 631-652 (QCDE…QIQQ), 851-880 (WDPS…LPQA), 1057-1104 (KKSS…SDTD), and 1128-1188 (ERKW…GFTA). A compositionally biased stretch (acidic residues) spans 1134–1146 (PEPENSESDDSQL). A Phosphoserine modification is found at Ser1203. 22 disordered regions span residues 1939–1976 (MPGE…EGKN), 2014–2043 (ERNP…RVNN), 2088–2179 (DQKE…PARD), 2254–2290 (ESQV…QEEN), 2377–2403 (GVEH…SSEA), 2416–2444 (MGSH…SPQD), 2479–2539 (LNKV…PRLL), 2589–2613 (RVAG…EGEA), 2642–2678 (LSAD…RKRR), 2696–2731 (SSSS…PVEE), 2765–2789 (PQET…PRTL), 2821–2852 (VQNS…ASPK), 2892–2955 (SKHS…PCRQ), 3124–3144 (NAQV…PHTL), 3199–3241 (HTCS…GLDG), 3274–3412 (SLRQ…MPST), 3564–3611 (IALG…KGSA), 3766–3790 (SDTS…AEET), 3830–3884 (LPSV…RVQK), 3906–3991 (ASTQ…SPKL), 4033–4086 (PEKV…QHLS), and 4153–4193 (PGGL…EWSK). A compositionally biased stretch (basic and acidic residues) spans 2088-2100 (DQKEQEKTDHAFR). The segment covering 2103-2118 (SSGNPLPSKDQPSSPR) has biased composition (polar residues). Positions 2119 to 2129 (QTDDTVFRDSE) are enriched in basic and acidic residues. Over residues 2137–2148 (SIGNHPQVQKIT) the composition is skewed to polar residues. Positions 2153–2169 (RSREGVRESEPVREHTH) are enriched in basic and acidic residues. The segment covering 2254–2266 (ESQVAEHVSSSNQ) has biased composition (polar residues). 2 stretches are compositionally biased toward basic and acidic residues: residues 2267 to 2279 (EEPK…EEMP) and 2379 to 2391 (EHQD…RSHS). The segment covering 2500-2510 (QASKPRQKAEK) has biased composition (basic and acidic residues). A compositionally biased stretch (polar residues) spans 2642 to 2653 (LSADSFESLPNT). The span at 2712 to 2729 (PSSADPLAPDSPRSSAPV) shows a compositional bias: low complexity. Residues 2916 to 2925 (APCRHPREAL) show a composition bias toward basic and acidic residues. Residues 3124-3141 (NAQVCQTNPEPPATTQGP) show a composition bias toward polar residues. 3 stretches are compositionally biased toward polar residues: residues 3274-3285 (SLRQNETPQPAA), 3320-3339 (SSPT…QELN), and 3368-3387 (SGKS…QKAS). Residues 3388-3397 (SRLDDGTTDH) show a composition bias toward basic and acidic residues. A compositionally biased stretch (low complexity) spans 3857–3872 (SSPSPSSPHSPGLFPS). The segment covering 3906–3924 (ASTQEPGLSPGSLTLSAPS) has biased composition (polar residues). The segment covering 3958 to 3975 (LGGSQRGRSSLQRSNGRS) has biased composition (low complexity). The span at 4048 to 4065 (EPSQWQSRTENGGESSAS) shows a compositional bias: polar residues. Positions 4334–4387 (SDIELMLQDYQQAHEEAKVEIARARDQLRERTEQEKLRIHQKIISQLLKEEDKL) form a coiled coil. Residues 4397–4411 (CTSSNGSLSSGMTSG) are compositionally biased toward low complexity. Residues 4397–4419 (CTSSNGSLSSGMTSGYNSSPALS) are disordered. One can recognise an START domain in the interval 4483-4700 (SYQDLAKHVV…IARLASFLGR (218 aa)).

This sequence belongs to the TRAFAC class myosin-kinesin ATPase superfamily. Kinesin family. As to quaternary structure, interacts with ATAD3A. Expressed in the central nervous system, muscle cells (heart and skeletal muscle), pancreas, prostate and lung.

It is found in the cytoplasm. It localises to the cytoskeleton. The protein localises to the microtubule organizing center. The protein resides in the centrosome. Its subcellular location is the centriole. It is found in the nucleus. Functionally, microtubule-dependent motor protein required for spindle pole assembly during mitosis. Required to stabilize the pericentriolar material (PCM). The protein is StAR-related lipid transfer protein 9 (STARD9) of Homo sapiens (Human).